Here is a 413-residue protein sequence, read N- to C-terminus: NADH:flavin oxidoreductase FG08077 (413 aa).

53–56 (APLC) serves as a coordination point for FMN. Position 58 (Y58) interacts with substrate. 2 residues coordinate FMN: A88 and Q130. Substrate is bound at residue 211–214 (HAAH). Residues R264 and 370–371 (GR) each bind FMN.

The protein belongs to the NADH:flavin oxidoreductase/NADH oxidase family. NamA subfamily. Requires FMN as cofactor.

It participates in mycotoxin biosynthesis. NADH:flavin oxidoreductase; part of the gene cluster that mediates the biosynthesis of butenolide, a mycotoxin that shows antibiotic activity but does not seem to play a major role in the spread of head blight in wheat. Butenolide is derived from glutamic acid via a 4-acetamido-2-butenoic acid intermediate. The predicted function of the NADH:flavin oxidoreductase FG08077, the cytochrome P450 monooxygenase FG08079, the decarboxylase FG08083, and the putative acetyltransferase FG08082 are consistent with this pathway, however, the respective activities of the butelonide biosynthesis cluster enzymes have still to be experimentally determined. The protein is NADH:flavin oxidoreductase FG08077 of Gibberella zeae (strain ATCC MYA-4620 / CBS 123657 / FGSC 9075 / NRRL 31084 / PH-1) (Wheat head blight fungus).